Reading from the N-terminus, the 217-residue chain is Variable small protein 22 (217 aa).

The signal sequence occupies residues M1 to S18. C19 is lipidated: N-palmitoyl cysteine. Residue C19 is the site of S-diacylglycerol cysteine attachment. The interval L151–K174 is disordered. Positions D155–K174 are enriched in basic and acidic residues.

The protein belongs to the variable small protein (Vsp) family.

The protein resides in the cell outer membrane. The Vlp and Vsp proteins are antigenically distinct proteins, only one vlp or vsp gene is transcriptionally active at any one time. Switching between these genes is a mechanism of host immune response evasion. This is Variable small protein 22 from Borrelia hermsii.